The sequence spans 375 residues: Carbamoyl phosphate synthase small chain (375 aa).

The CPSase stretch occupies residues M1–K180. L-glutamine contacts are provided by S46, G232, and G234. The Glutamine amidotransferase type-1 domain occupies T184–R375. C260 functions as the Nucleophile in the catalytic mechanism. L-glutamine is bound by residues F261, Q264, N302, G304, and F305. Active-site residues include H350 and E352.

Belongs to the CarA family. Composed of two chains; the small (or glutamine) chain promotes the hydrolysis of glutamine to ammonia, which is used by the large (or ammonia) chain to synthesize carbamoyl phosphate. Tetramer of heterodimers (alpha,beta)4.

It catalyses the reaction hydrogencarbonate + L-glutamine + 2 ATP + H2O = carbamoyl phosphate + L-glutamate + 2 ADP + phosphate + 2 H(+). The catalysed reaction is L-glutamine + H2O = L-glutamate + NH4(+). It functions in the pathway amino-acid biosynthesis; L-arginine biosynthesis; carbamoyl phosphate from bicarbonate: step 1/1. Its pathway is pyrimidine metabolism; UMP biosynthesis via de novo pathway; (S)-dihydroorotate from bicarbonate: step 1/3. Small subunit of the glutamine-dependent carbamoyl phosphate synthetase (CPSase). CPSase catalyzes the formation of carbamoyl phosphate from the ammonia moiety of glutamine, carbonate, and phosphate donated by ATP, constituting the first step of 2 biosynthetic pathways, one leading to arginine and/or urea and the other to pyrimidine nucleotides. The small subunit (glutamine amidotransferase) binds and cleaves glutamine to supply the large subunit with the substrate ammonia. This is Carbamoyl phosphate synthase small chain from Mycobacterium leprae (strain TN).